The sequence spans 149 residues: NADH-quinone oxidoreductase subunit A (149 aa).

A run of 3 helical transmembrane segments spans residues 16 to 36 (FGIFLIVAIGLCCLMLVGAWF), 68 to 88 (FYLVAMFFVIFDVEALYLFAW), and 98 to 118 (LGFIEAAIFILVLLAGLVYLV).

It belongs to the complex I subunit 3 family. In terms of assembly, NDH-1 is composed of 13 different subunits. Subunits NuoA, H, J, K, L, M, N constitute the membrane sector of the complex.

The protein localises to the cell inner membrane. It catalyses the reaction a quinone + NADH + 5 H(+)(in) = a quinol + NAD(+) + 4 H(+)(out). Functionally, NDH-1 shuttles electrons from NADH, via FMN and iron-sulfur (Fe-S) centers, to quinones in the respiratory chain. The immediate electron acceptor for the enzyme in this species is believed to be ubiquinone. Couples the redox reaction to proton translocation (for every two electrons transferred, four hydrogen ions are translocated across the cytoplasmic membrane), and thus conserves the redox energy in a proton gradient. This is NADH-quinone oxidoreductase subunit A from Cronobacter sakazakii (strain ATCC BAA-894) (Enterobacter sakazakii).